Reading from the N-terminus, the 872-residue chain is DNA mismatch repair protein MutS (872 aa).

Polar residues predominate over residues 1 to 17 (MSISKIESVNAEKQSPV). A disordered region spans residues 1 to 22 (MSISKIESVNAEKQSPVGTEIG). Residue 632 to 639 (GPNMGGKS) participates in ATP binding.

This sequence belongs to the DNA mismatch repair MutS family.

This protein is involved in the repair of mismatches in DNA. It is possible that it carries out the mismatch recognition step. This protein has a weak ATPase activity. The sequence is that of DNA mismatch repair protein MutS from Azoarcus sp. (strain BH72).